Reading from the N-terminus, the 77-residue chain is Acyl carrier protein (77 aa).

In terms of domain architecture, Carrier spans 1–76 (MDREQRIKEI…DVINYLNEKL (76 aa)). The residue at position 36 (Ser-36) is an O-(pantetheine 4'-phosphoryl)serine.

Belongs to the acyl carrier protein (ACP) family. 4'-phosphopantetheine is transferred from CoA to a specific serine of apo-ACP by AcpS. This modification is essential for activity because fatty acids are bound in thioester linkage to the sulfhydryl of the prosthetic group.

The protein resides in the cytoplasm. It functions in the pathway lipid metabolism; fatty acid biosynthesis. Its function is as follows. Carrier of the growing fatty acid chain in fatty acid biosynthesis. This is Acyl carrier protein from Hydrogenobaculum sp. (strain Y04AAS1).